The sequence spans 504 residues: MEEFQGYLELDKYQQHDFLYPLIFREYIYALAYDHGLNRSILLDNVGYENKYSLLIIKRLISRMYKQNNFIISANDSNQNKFLGYNKNLYSQMISEGFAVIVEIPFSLRLVSSLEATEIVKSYNLRSIHSIFPFLEDKFSHLNYVSDVLIPYPIHLEILVQTLRYWVKDPSSLHLLRLFLHEYYNLNSLITPNKFIFSKSNPRLFLLLYNSHVCEYESILLFIRNQSSHLRLTSSGIFFERIHFYEKRKYPGEEVFSNDFPSAILWFFKDPFMHYVRYQGKSILASKDSALLMNKWKYYLVNLWQCHSYVWSQPGRICINQLSKHSIYFLGYFSSMRPNLSVVRSQMLENSFIMDNAMKKFDTLVPIIPLIRSLAKVKFCNTLGHPISKSAWADSSDFDIIDRFVRICRNLSHYYSGSSRKKSLYRIKYILRLSCVKTLARKHKSTVRTFLKRLGSKLLEEFFTEEQQILSLIFPRASYTLKKFYRGRIWYLDIFCINDLANHE.

Belongs to the intron maturase 2 family. MatK subfamily.

The protein localises to the plastid. The protein resides in the chloroplast. Its function is as follows. Usually encoded in the trnK tRNA gene intron. Probably assists in splicing its own and other chloroplast group II introns. This chain is Maturase K, found in Adenostoma fasciculatum (Chamise).